The sequence spans 67 residues: Protein AaeX (67 aa).

Transmembrane regions (helical) follow at residues 3–23 and 43–63; these read VLPV…ELII and LVWH…YLVS.

The protein belongs to the AaeX family.

Its subcellular location is the cell membrane. In Pantoea vagans (strain C9-1) (Pantoea agglomerans (strain C9-1)), this protein is Protein AaeX.